The primary structure comprises 207 residues: ADP-ribosylation factor (207 aa).

The N-myristoyl glycine moiety is linked to residue glycine 2. GTP is bound by residues 32–39, 75–79, and 133–136; these read GLDGAGKT, DIGGQ, and NKID.

It belongs to the small GTPase superfamily. Arf family.

The protein localises to the golgi apparatus. GTP-binding protein involved in protein trafficking; may modulate vesicle budding and uncoating within the Golgi apparatus. The polypeptide is ADP-ribosylation factor (ARF-1) (Encephalitozoon cuniculi (strain GB-M1) (Microsporidian parasite)).